Reading from the N-terminus, the 138-residue chain is Ribulose bisphosphate carboxylase small subunit (138 aa).

Belongs to the RuBisCO small chain family. As to quaternary structure, heterohexadecamer of 8 large and 8 small subunits.

It is found in the plastid. Its subcellular location is the chloroplast. Its function is as follows. RuBisCO catalyzes two reactions: the carboxylation of D-ribulose 1,5-bisphosphate, the primary event in carbon dioxide fixation, as well as the oxidative fragmentation of the pentose substrate in the photorespiration process. Both reactions occur simultaneously and in competition at the same active site. Although the small subunit is not catalytic it is essential for maximal activity. In Pyropia suborbiculata (Red alga), this protein is Ribulose bisphosphate carboxylase small subunit.